The chain runs to 151 residues: Large ribosomal subunit protein uL15 (151 aa).

Residues 1–58 (MTSISLDSLKPNKGARKRKTRKGRGIAAGQGASCGFGMRGQKSRSGRPTRPGFEGGQM) are disordered. Basic residues predominate over residues 13-24 (KGARKRKTRKGR). The span at 26 to 38 (IAAGQGASCGFGM) shows a compositional bias: gly residues.

It belongs to the universal ribosomal protein uL15 family. As to quaternary structure, part of the 50S ribosomal subunit.

Functionally, binds to the 23S rRNA. In Prochlorococcus marinus (strain SARG / CCMP1375 / SS120), this protein is Large ribosomal subunit protein uL15.